The chain runs to 83 residues: Exodeoxyribonuclease 7 small subunit (83 aa).

This sequence belongs to the XseB family. As to quaternary structure, heterooligomer composed of large and small subunits.

Its subcellular location is the cytoplasm. It carries out the reaction Exonucleolytic cleavage in either 5'- to 3'- or 3'- to 5'-direction to yield nucleoside 5'-phosphates.. Functionally, bidirectionally degrades single-stranded DNA into large acid-insoluble oligonucleotides, which are then degraded further into small acid-soluble oligonucleotides. The polypeptide is Exodeoxyribonuclease 7 small subunit (Sinorhizobium medicae (strain WSM419) (Ensifer medicae)).